Consider the following 414-residue polypeptide: Probable sugar-binding periplasmic protein (414 aa).

The N-terminal stretch at 1 to 22 (MRKFMTTTAVAALMLAATAARA) is a signal peptide.

Belongs to the bacterial solute-binding protein 1 family.

The protein resides in the periplasm. Functionally, part of a binding-protein-dependent transport system for a sugar. The protein is Probable sugar-binding periplasmic protein of Rhizobium meliloti (strain 1021) (Ensifer meliloti).